The chain runs to 179 residues: Protein Syd (179 aa).

This sequence belongs to the Syd family.

The protein localises to the cell inner membrane. Functionally, interacts with the SecY protein in vivo. May bind preferentially to an uncomplexed state of SecY, thus functioning either as a chelating agent for excess SecY in the cell or as a regulatory factor that negatively controls the translocase function. This Pseudoalteromonas translucida (strain TAC 125) protein is Protein Syd.